The following is a 457-amino-acid chain: Siroheme synthase (457 aa).

The segment at 1 to 204 (MDHLPIFCQL…NDQKAITETT (204 aa)) is precorrin-2 dehydrogenase /sirohydrochlorin ferrochelatase. Residues 22-23 (DV) and 43-44 (LA) contribute to the NAD(+) site. Position 128 is a phosphoserine (serine 128). Residues 216–457 (GEVVLVGAGP…RDKLNWFSNH (242 aa)) form a uroporphyrinogen-III C-methyltransferase region. An S-adenosyl-L-methionine-binding site is contributed by proline 225. The active-site Proton acceptor is the aspartate 248. Lysine 270 functions as the Proton donor in the catalytic mechanism. Residues 301 to 303 (GGD), isoleucine 306, 331 to 332 (TA), methionine 382, and glycine 411 contribute to the S-adenosyl-L-methionine site.

This sequence in the N-terminal section; belongs to the precorrin-2 dehydrogenase / sirohydrochlorin ferrochelatase family. The protein in the C-terminal section; belongs to the precorrin methyltransferase family.

The enzyme catalyses uroporphyrinogen III + 2 S-adenosyl-L-methionine = precorrin-2 + 2 S-adenosyl-L-homocysteine + H(+). It catalyses the reaction precorrin-2 + NAD(+) = sirohydrochlorin + NADH + 2 H(+). It carries out the reaction siroheme + 2 H(+) = sirohydrochlorin + Fe(2+). It participates in cofactor biosynthesis; adenosylcobalamin biosynthesis; precorrin-2 from uroporphyrinogen III: step 1/1. It functions in the pathway cofactor biosynthesis; adenosylcobalamin biosynthesis; sirohydrochlorin from precorrin-2: step 1/1. Its pathway is porphyrin-containing compound metabolism; siroheme biosynthesis; precorrin-2 from uroporphyrinogen III: step 1/1. The protein operates within porphyrin-containing compound metabolism; siroheme biosynthesis; siroheme from sirohydrochlorin: step 1/1. It participates in porphyrin-containing compound metabolism; siroheme biosynthesis; sirohydrochlorin from precorrin-2: step 1/1. In terms of biological role, multifunctional enzyme that catalyzes the SAM-dependent methylations of uroporphyrinogen III at position C-2 and C-7 to form precorrin-2 via precorrin-1. Then it catalyzes the NAD-dependent ring dehydrogenation of precorrin-2 to yield sirohydrochlorin. Finally, it catalyzes the ferrochelation of sirohydrochlorin to yield siroheme. The polypeptide is Siroheme synthase (Escherichia coli O17:K52:H18 (strain UMN026 / ExPEC)).